The following is a 222-amino-acid chain: N-(5'-phosphoribosyl)anthranilate isomerase (222 aa).

It belongs to the TrpF family.

The enzyme catalyses N-(5-phospho-beta-D-ribosyl)anthranilate = 1-(2-carboxyphenylamino)-1-deoxy-D-ribulose 5-phosphate. It participates in amino-acid biosynthesis; L-tryptophan biosynthesis; L-tryptophan from chorismate: step 3/5. This chain is N-(5'-phosphoribosyl)anthranilate isomerase, found in Xanthomonas campestris pv. campestris (strain 8004).